We begin with the raw amino-acid sequence, 423 residues long: Histidine--tRNA ligase (423 aa).

This sequence belongs to the class-II aminoacyl-tRNA synthetase family. In terms of assembly, homodimer.

It localises to the cytoplasm. The enzyme catalyses tRNA(His) + L-histidine + ATP = L-histidyl-tRNA(His) + AMP + diphosphate + H(+). The protein is Histidine--tRNA ligase of Actinobacillus pleuropneumoniae serotype 7 (strain AP76).